An 859-amino-acid polypeptide reads, in one-letter code: Cation/H(+) antiporter 24 (859 aa).

12 helical membrane passes run 64–84 (AFST…VVSI), 92–112 (PRIV…FGGI), 122–142 (PIAN…FLFL), 161–181 (YIAA…GMAM), 194–214 (SIGG…YTVL), 227–247 (FAMS…VIFE), 258–278 (YSVF…LLVV), 291–311 (EGTL…LASC), 312–332 (FLTD…GLLV), 348–368 (TFIY…GTNI), 384–404 (FYMT…AALF), and 438–458 (IVGF…TAVT). Residues 538–566 (IDHEQRKEEEEEEYEEEEEEPERKQSGRI) are disordered. Residues 546-557 (EEEEEYEEEEEE) are compositionally biased toward acidic residues. Ser-857 carries the phosphoserine modification.

It belongs to the monovalent cation:proton antiporter 2 (CPA2) transporter (TC 2.A.37) family. CHX (TC 2.A.37.4) subfamily. In terms of tissue distribution, specifically expressed in pollen.

The protein localises to the membrane. May operate as a cation/H(+) antiporter. The chain is Cation/H(+) antiporter 24 (CHX24) from Arabidopsis thaliana (Mouse-ear cress).